The primary structure comprises 884 residues: Translation initiation factor IF-2 (884 aa).

2 stretches are compositionally biased toward basic and acidic residues: residues 110-153 and 193-234; these read AKAK…KEKA and KQKE…DHHV. The disordered stretch occupies residues 110–291; it reads AKAKAEADAK…NRSTAPQSMA (182 aa). The span at 255 to 268 shows a compositional bias: basic residues; sequence GRRARNKPTNKKRG. The tr-type G domain occupies 384-553; sequence TRAPVVTIMG…LLQSEVLELK (170 aa). Positions 393 to 400 are G1; sequence GHVDHGKT. 393–400 provides a ligand contact to GTP; the sequence is GHVDHGKT. Positions 418 to 422 are G2; sequence GITQH. Residues 439–442 are G3; it reads DTPG. Residues 439–443 and 493–496 contribute to the GTP site; these read DTPGH and NKMD. Residues 493–496 are G4; it reads NKMD. The interval 529–531 is G5; sequence SAK.

Belongs to the TRAFAC class translation factor GTPase superfamily. Classic translation factor GTPase family. IF-2 subfamily.

The protein localises to the cytoplasm. Its function is as follows. One of the essential components for the initiation of protein synthesis. Protects formylmethionyl-tRNA from spontaneous hydrolysis and promotes its binding to the 30S ribosomal subunits. Also involved in the hydrolysis of GTP during the formation of the 70S ribosomal complex. The polypeptide is Translation initiation factor IF-2 (Shewanella denitrificans (strain OS217 / ATCC BAA-1090 / DSM 15013)).